The chain runs to 512 residues: Protein spinster homolog 3 (512 aa).

Residues 1-30 form a disordered region; that stretch reads MAGGMSAECPEPGPGGLQGQSPGPGRQCPP. Transmembrane regions (helical) follow at residues 50-70, 84-104, 112-132, 145-165, 173-193, 204-224, 260-280, 309-329, 343-365, 377-397, 411-431, and 450-470; these read VLCYINLLNYMNWFIIAGVLL, GLLQTVFVSCLLLSAPVFGYL, ATMSFGILLWSGAGLSSSFIS, IVGTGSASYSTIAPTVLGDLF, VLAVFYIFIPVGSGLGYVLGS, WALRVMPCLEAVALILLILLV, FVWSTLGVTAMAFVTGALGFW, LIFGALTIMTGVIGVILGAEA, LICASSLLATAPCLYLALVLAPT, GELLLSCNWAVVADILLSVVV, VGHILGDAGSPYLTGLISSVL, and FLCCAFVIALGGGCFLLTALY. Residues 481–512 form a disordered region; that stretch reads PVTGTPDSNDVDSNDLERQGLLSGAGASTEEP.

This sequence belongs to the major facilitator superfamily. Spinster (TC 2.A.1.49) family.

Its subcellular location is the membrane. Its function is as follows. Sphingolipid transporter. In Homo sapiens (Human), this protein is Protein spinster homolog 3 (SPNS3).